A 127-amino-acid polypeptide reads, in one-letter code: Small ribosomal subunit protein bS6 (127 aa).

This sequence belongs to the bacterial ribosomal protein bS6 family.

Binds together with bS18 to 16S ribosomal RNA. The protein is Small ribosomal subunit protein bS6 of Buchnera aphidicola subsp. Cinara cedri (strain Cc).